The primary structure comprises 427 residues: Adenylosuccinate synthetase (427 aa).

Residues 12–18 (GDEGKGK) and 40–42 (GHT) contribute to the GTP site. Asp-13 functions as the Proton acceptor in the catalytic mechanism. Residues Asp-13 and Gly-40 each coordinate Mg(2+). IMP-binding positions include 13–16 (DEGK), 38–41 (NAGH), Thr-128, Arg-142, Gln-223, Thr-238, and Arg-302. The Proton donor role is filled by His-41. Residue 298–304 (TTTGRPR) coordinates substrate. GTP-binding positions include Arg-304, 330–332 (SID), and 412–414 (SVG).

The protein belongs to the adenylosuccinate synthetase family. Homodimer. Mg(2+) is required as a cofactor.

The protein resides in the cytoplasm. It catalyses the reaction IMP + L-aspartate + GTP = N(6)-(1,2-dicarboxyethyl)-AMP + GDP + phosphate + 2 H(+). It participates in purine metabolism; AMP biosynthesis via de novo pathway; AMP from IMP: step 1/2. Plays an important role in the de novo pathway of purine nucleotide biosynthesis. Catalyzes the first committed step in the biosynthesis of AMP from IMP. This Staphylococcus epidermidis (strain ATCC 12228 / FDA PCI 1200) protein is Adenylosuccinate synthetase.